Reading from the N-terminus, the 528-residue chain is Calcium-dependent protein kinase 17 (528 aa).

Positions 1-65 are disordered; it reads MGNCCSHGRD…GPIGPVLGRP (65 aa). A lipid anchor (N-myristoyl glycine) is attached at glycine 2. Residues 20–45 are compositionally biased toward low complexity; that stretch reads NGASASNAANSTGPTAEASVPQSKHA. A Protein kinase domain is found at 73–331; it reads YSLGKELGRG…AAQVLNHPWI (259 aa). ATP-binding positions include 79-87 and lysine 102; that span reads LGRGQFGVT. The active-site Proton acceptor is the aspartate 197. Serine 237 is modified (phosphoserine). Residues 337–367 are autoinhibitory domain; the sequence is APDVPLDNAVMSRLKQFKAMNNFKKVALRVI. 4 consecutive EF-hand domains span residues 374–409, 410–445, 446–481, and 485–516; these read EEIMGLKEMFKGMDTDSSGTITLEELRQGLAKQGTR, LSEYEVQQLMEAADADGNGTIDYGEFIAATMHINRL, DREEHLYSAFQHFDKDNSGYITMEELEQALREFGMN, and DIKEIISEVDGDNDGRINYDEFVAMMRKGNPD. Ca(2+)-binding residues include aspartate 387, aspartate 389, serine 391, threonine 393, glutamate 398, aspartate 423, aspartate 425, asparagine 427, threonine 429, glutamate 434, aspartate 459, aspartate 461, serine 463, tyrosine 465, glutamate 470, aspartate 494, aspartate 496, aspartate 498, arginine 500, and glutamate 505.

This sequence belongs to the protein kinase superfamily. Ser/Thr protein kinase family. CDPK subfamily.

Its subcellular location is the membrane. The enzyme catalyses L-seryl-[protein] + ATP = O-phospho-L-seryl-[protein] + ADP + H(+). It catalyses the reaction L-threonyl-[protein] + ATP = O-phospho-L-threonyl-[protein] + ADP + H(+). Its activity is regulated as follows. Activated by calcium. Autophosphorylation may play an important role in the regulation of the kinase activity. Its function is as follows. May play a role in signal transduction pathways that involve calcium as a second messenger. The polypeptide is Calcium-dependent protein kinase 17 (CPK17) (Arabidopsis thaliana (Mouse-ear cress)).